The sequence spans 204 residues: Holliday junction branch migration complex subunit RuvA (204 aa).

The segment at Met1–Met64 is domain I. The interval Ala65–Gly143 is domain II. The interval Phe144–Gly151 is flexible linker. The tract at residues Val152–Arg204 is domain III.

The protein belongs to the RuvA family. As to quaternary structure, homotetramer. Forms an RuvA(8)-RuvB(12)-Holliday junction (HJ) complex. HJ DNA is sandwiched between 2 RuvA tetramers; dsDNA enters through RuvA and exits via RuvB. An RuvB hexamer assembles on each DNA strand where it exits the tetramer. Each RuvB hexamer is contacted by two RuvA subunits (via domain III) on 2 adjacent RuvB subunits; this complex drives branch migration. In the full resolvosome a probable DNA-RuvA(4)-RuvB(12)-RuvC(2) complex forms which resolves the HJ.

Its subcellular location is the cytoplasm. Functionally, the RuvA-RuvB-RuvC complex processes Holliday junction (HJ) DNA during genetic recombination and DNA repair, while the RuvA-RuvB complex plays an important role in the rescue of blocked DNA replication forks via replication fork reversal (RFR). RuvA specifically binds to HJ cruciform DNA, conferring on it an open structure. The RuvB hexamer acts as an ATP-dependent pump, pulling dsDNA into and through the RuvAB complex. HJ branch migration allows RuvC to scan DNA until it finds its consensus sequence, where it cleaves and resolves the cruciform DNA. In Rhizobium rhizogenes (strain K84 / ATCC BAA-868) (Agrobacterium radiobacter), this protein is Holliday junction branch migration complex subunit RuvA.